Here is a 379-residue protein sequence, read N- to C-terminus: UDP-4-amino-4-deoxy-L-arabinose--oxoglutarate aminotransferase (379 aa).

At K182 the chain carries N6-(pyridoxal phosphate)lysine.

It belongs to the DegT/DnrJ/EryC1 family. ArnB subfamily. In terms of assembly, homodimer. Pyridoxal 5'-phosphate is required as a cofactor.

It catalyses the reaction UDP-4-amino-4-deoxy-beta-L-arabinose + 2-oxoglutarate = UDP-beta-L-threo-pentopyranos-4-ulose + L-glutamate. The protein operates within nucleotide-sugar biosynthesis; UDP-4-deoxy-4-formamido-beta-L-arabinose biosynthesis; UDP-4-deoxy-4-formamido-beta-L-arabinose from UDP-alpha-D-glucuronate: step 2/3. Its pathway is bacterial outer membrane biogenesis; lipopolysaccharide biosynthesis. Functionally, catalyzes the conversion of UDP-4-keto-arabinose (UDP-Ara4O) to UDP-4-amino-4-deoxy-L-arabinose (UDP-L-Ara4N). The modified arabinose is attached to lipid A and is required for resistance to polymyxin and cationic antimicrobial peptides. In Klebsiella pneumoniae (strain 342), this protein is UDP-4-amino-4-deoxy-L-arabinose--oxoglutarate aminotransferase.